A 59-amino-acid polypeptide reads, in one-letter code: Large ribosomal subunit protein uL30 (59 aa).

This sequence belongs to the universal ribosomal protein uL30 family. Part of the 50S ribosomal subunit.

This is Large ribosomal subunit protein uL30 from Staphylococcus saprophyticus subsp. saprophyticus (strain ATCC 15305 / DSM 20229 / NCIMB 8711 / NCTC 7292 / S-41).